A 1172-amino-acid chain; its full sequence is WD repeat-containing protein 48 homolog (1172 aa).

The interval 1–115 (MYEYYSTGKI…HSYGGGGGGT (115 aa)) is disordered. Residues 13-36 (LPQQVDSNGINSKPMNSSPSTPIP) are compositionally biased toward polar residues. The segment covering 37–63 (NNNNNNNNNNNNNNNNNNNNNNNNNNN) has biased composition (low complexity). Residues 64–89 (RNKSQQSFYLNNNNRNCGFSSPTKPQ) show a composition bias toward polar residues. The span at 90–107 (YNNNNNNNNNNNSNYNHS) shows a compositional bias: low complexity. WD repeat units follow at residues 152-202 (RHCF…GFKF), 208-246 (DHTD…CVNS), 249-548 (FHDD…SPMF), 560-599 (GEGI…KIFK), 602-641 (GHTD…CIQV), 645-683 (LHTD…QSRL), and 686-727 (RENE…NQSI). Residues 341-365 (ISTNNNNNNSSSSNNNNNNNNNNNN) are compositionally biased toward low complexity. The tract at residues 341-544 (ISTNNNNNNS…NDNNNLNKKF (204 aa)) is disordered. Polar residues-rich tracts occupy residues 366–377 (GQTNTHENTAET), 388–408 (QLSS…NFRN), and 417–434 (PPSS…SNGR). Residues 435–485 (NVNNRENNNNNNNNNNNNNNNNNNNNNNNNNNNNNNNNNINNNNHENNGNV) are compositionally biased toward low complexity. The segment covering 486–503 (DVDDEDDDDDDDDDDDDD) has biased composition (acidic residues). Positions 504 to 513 (CNKNKKKYDD) are enriched in basic and acidic residues. Over residues 514 to 543 (NNNNNNYNNNNNKKNNSNDNNNDNNNLNKK) the composition is skewed to low complexity. A compositionally biased stretch (low complexity) spans 745-769 (NNNNNNNNNNNNNNNNNNNNNNNNN). The segment at 745-775 (NNNNNNNNNNNNNNNNNNNNNNNNNNREKLS) is disordered. The stretch at 794 to 833 (QGRAGIIKNQVLNNRRQVLTKDNDNNVQLWDITKGKEIES) is one WD 8 repeat. A disordered region spans residues 926–986 (ELNHSNDSVN…TNSTTPNSGR (61 aa)). The span at 930–984 (SNDSVNSSLSSNTSGDNNNNNYNNYNNYNNNNNNGLQKSSSSSSIVSTNSTTPNS) shows a compositional bias: low complexity.

This sequence belongs to the WD repeat WDR48 family.

This chain is WD repeat-containing protein 48 homolog, found in Dictyostelium discoideum (Social amoeba).